The following is a 182-amino-acid chain: NADH-quinone oxidoreductase subunit I (182 aa).

2 4Fe-4S ferredoxin-type domains span residues 50–82 (IILS…LQKA) and 92–121 (EFFR…MTPD). The [4Fe-4S] cluster site is built by Cys-62, Cys-65, Cys-68, Cys-72, Cys-101, Cys-104, Cys-107, and Cys-111.

Belongs to the complex I 23 kDa subunit family. As to quaternary structure, NDH-1 is composed of 14 different subunits. Subunits NuoA, H, J, K, L, M, N constitute the membrane sector of the complex. The cofactor is [4Fe-4S] cluster.

Its subcellular location is the cell inner membrane. The enzyme catalyses a quinone + NADH + 5 H(+)(in) = a quinol + NAD(+) + 4 H(+)(out). NDH-1 shuttles electrons from NADH, via FMN and iron-sulfur (Fe-S) centers, to quinones in the respiratory chain. The immediate electron acceptor for the enzyme in this species is believed to be ubiquinone. Couples the redox reaction to proton translocation (for every two electrons transferred, four hydrogen ions are translocated across the cytoplasmic membrane), and thus conserves the redox energy in a proton gradient. In Psychrobacter arcticus (strain DSM 17307 / VKM B-2377 / 273-4), this protein is NADH-quinone oxidoreductase subunit I.